The primary structure comprises 164 residues: Large ribosomal subunit protein uL10 (164 aa).

This sequence belongs to the universal ribosomal protein uL10 family. Part of the ribosomal stalk of the 50S ribosomal subunit. The N-terminus interacts with L11 and the large rRNA to form the base of the stalk. The C-terminus forms an elongated spine to which L12 dimers bind in a sequential fashion forming a multimeric L10(L12)X complex.

Functionally, forms part of the ribosomal stalk, playing a central role in the interaction of the ribosome with GTP-bound translation factors. This chain is Large ribosomal subunit protein uL10, found in Aliivibrio salmonicida (strain LFI1238) (Vibrio salmonicida (strain LFI1238)).